The following is a 391-amino-acid chain: Formate-dependent phosphoribosylglycinamide formyltransferase (391 aa).

N(1)-(5-phospho-beta-D-ribosyl)glycinamide-binding positions include 20-21 (EL) and Glu-80. ATP contacts are provided by residues Arg-112, Lys-153, 158–163 (SSGKGQ), 193–196 (EGFI), and Glu-201. An ATP-grasp domain is found at 117 to 306 (RLAAETLGLP…EFALHVRAIL (190 aa)). The Mg(2+) site is built by Glu-265 and Glu-277. Residues Asp-284, Lys-354, and 361 to 362 (RR) contribute to the N(1)-(5-phospho-beta-D-ribosyl)glycinamide site.

It belongs to the PurK/PurT family. As to quaternary structure, homodimer.

The enzyme catalyses N(1)-(5-phospho-beta-D-ribosyl)glycinamide + formate + ATP = N(2)-formyl-N(1)-(5-phospho-beta-D-ribosyl)glycinamide + ADP + phosphate + H(+). Its pathway is purine metabolism; IMP biosynthesis via de novo pathway; N(2)-formyl-N(1)-(5-phospho-D-ribosyl)glycinamide from N(1)-(5-phospho-D-ribosyl)glycinamide (formate route): step 1/1. Functionally, involved in the de novo purine biosynthesis. Catalyzes the transfer of formate to 5-phospho-ribosyl-glycinamide (GAR), producing 5-phospho-ribosyl-N-formylglycinamide (FGAR). Formate is provided by PurU via hydrolysis of 10-formyl-tetrahydrofolate. This is Formate-dependent phosphoribosylglycinamide formyltransferase from Shewanella sp. (strain MR-7).